The primary structure comprises 966 residues: Protein STICHEL-like 4 (966 aa).

Disordered stretches follow at residues 64–118 and 200–237; these read RSLR…DRSS and RDNA…REQN. Residues 75 to 84 show a composition bias toward basic and acidic residues; it reads LKEDHQDSRE. Polar residues predominate over residues 98 to 108; sequence PIVSFGTSKVT. A compositionally biased stretch (basic and acidic residues) spans 109–118; the sequence is PSDEKFDRSS. The segment covering 208 to 217 has biased composition (polar residues); that stretch reads SEMSIASNSV. Residues 219 to 236 are compositionally biased toward basic and acidic residues; the sequence is RGEKYEGEEGGGGRDREQ. Position 384 to 391 (384 to 391) interacts with ATP; that stretch reads GPNGTGKT. 4 residues coordinate Zn(2+): Cys403, Cys412, Cys415, and Cys418. Residues 650 to 678 adopt a coiled-coil conformation; that stretch reads SKEDMEKLKQALKTLSESEKQLRVSNDKL. A compositionally biased stretch (polar residues) spans 706-717; it reads FNHTPLTDSDPS. The segment at 706–733 is disordered; the sequence is FNHTPLTDSDPSNHVVAGTRRDDSKQGF.

It belongs to the DnaX/STICHEL family.

In Arabidopsis thaliana (Mouse-ear cress), this protein is Protein STICHEL-like 4.